Here is a 152-residue protein sequence, read N- to C-terminus: Transcriptional regulator MraZ (152 aa).

SpoVT-AbrB domains follow at residues 5–52 (ASAI…PIHE) and 81–124 (AHEV…DEQA).

Belongs to the MraZ family. Forms oligomers.

It is found in the cytoplasm. The protein localises to the nucleoid. This chain is Transcriptional regulator MraZ, found in Shewanella putrefaciens (strain CN-32 / ATCC BAA-453).